The following is a 355-amino-acid chain: MSVLGELDLLGPRAHGAACGEAVLKAVAEDFQVDEVLEIPLSGEGEHLWLWVEKRGLNTEEAARRLGRAAGVQQKNVSYAGLKDRQALTRQWFSLHLPGKADPDLGAAEGADLRILRCTRHSRKLQRGAHAANGFTLRLTGLRAERAPLDARLERIAADGVPNYFGLQRFGHGGGNLVDARSCAEQDLLPANRNLRSRFLSAGRSYLFNRLLAERVAEGSWNRAAVGDLLAFTDSRSFFLAGEEECRDARLAALDLHPTGPLWGEGDPPSGAGVLDRELALAGREPALCRWLAKAGMAHERRILRLPIQGLAWHYPEPDVLQLEFVLPAGCFATVVVREILDLVPTGQTENPCAY.

Asp84 functions as the Nucleophile in the catalytic mechanism. One can recognise a TRUD domain in the interval 160-306 (GVPNYFGLQR…MAHERRILRL (147 aa)).

The protein belongs to the pseudouridine synthase TruD family.

The catalysed reaction is uridine(13) in tRNA = pseudouridine(13) in tRNA. In terms of biological role, responsible for synthesis of pseudouridine from uracil-13 in transfer RNAs. In Pseudomonas aeruginosa (strain ATCC 15692 / DSM 22644 / CIP 104116 / JCM 14847 / LMG 12228 / 1C / PRS 101 / PAO1), this protein is tRNA pseudouridine synthase D.